Reading from the N-terminus, the 1679-residue chain is AF4/FMR2 family member lilli (1679 aa).

8 disordered regions span residues 1–21, 55–78, 124–305, 406–539, 580–609, 733–755, 783–1172, and 1197–1319; these read MAQQ…SSIN, NYNM…QQGI, RSAP…EKDV, LHQL…GAQN, MGAG…SNKW, DSGT…AVGG, QPTQ…TTPH, and TPAQ…LQIG. Basic and acidic residues predominate over residues 69–78; sequence REKIERQQGI. Low complexity-rich tracts occupy residues 144-181 and 212-244; these read SLGH…QQQQ and PSSS…SSGG. Position 421 is a phosphothreonine (Thr421). Residues 429–442 show a composition bias toward basic and acidic residues; it reads LKTEKNHSLEKQDS. The segment covering 444-455 has biased composition (acidic residues); the sequence is LENDLELSESED. Phosphoserine is present on residues Ser451 and Ser453. Low complexity predominate over residues 464-484; the sequence is SAGNSSNSSESDSSESGSESS. Residues 492–501 show a composition bias toward basic residues; sequence HPNHQQHHHQ. Residues 502 to 532 are compositionally biased toward low complexity; sequence LQQQQQQQQQQASMQQQQVLQQQQQHRPQPL. A compositionally biased stretch (gly residues) spans 582–591; it reads AGSGSGGTLS. Over residues 598–609 the composition is skewed to polar residues; that stretch reads NKTPSPTESNKW. The span at 733 to 752 shows a compositional bias: low complexity; it reads DSGTSASGSSSSSSSSSDSA. Over residues 783 to 796 the composition is skewed to polar residues; that stretch reads QPTQSQKAPPSNSV. The segment covering 810–820 has biased composition (basic residues); that stretch reads QRQKKPRKKKA. Residues Ser829 and Ser830 each carry the phosphoserine modification. The segment at residues 859 to 871 is a DNA-binding region (a.T hook); sequence KKGRGRPRKQQQS. Residues 868–906 show a composition bias toward low complexity; it reads QQQSGGSGNLSSASAGSSSQTKGPTLTAAKKPLAKTPLA. Residues Ser879 and Ser881 each carry the phosphoserine modification. Residues 917–927 show a composition bias toward polar residues; sequence SQSSSNGNTPT. Composition is skewed to low complexity over residues 957-973 and 1001-1012; these read SSSA…SSSS and GSGSSSPSSSGS. Residues 1019 to 1030 are compositionally biased toward polar residues; sequence TRSQVGSGQALA. Low complexity predominate over residues 1042-1068; it reads SQHSQHLSSSECSSSSGGCTAVCSSSS. The span at 1073 to 1090 shows a compositional bias: basic and acidic residues; that stretch reads EGRREKERERKPKSDKNK. The span at 1130-1140 shows a compositional bias: pro residues; that stretch reads QPPPPQAPPAA. Positions 1198-1213 are enriched in polar residues; sequence PAQQNGHLTPKDQATN. Basic and acidic residues-rich tracts occupy residues 1234 to 1251 and 1260 to 1288; these read EHPV…EAKF and FQLK…EQPP. A Phosphoserine modification is found at Ser1368. Thr1370 is modified (phosphothreonine). The segment covering 1569-1589 has biased composition (low complexity); the sequence is GNTPSSISPSNSVGSQGSGSN. The disordered stretch occupies residues 1569-1594; the sequence is GNTPSSISPSNSVGSQGSGSNTPPGR.

This sequence belongs to the AF4 family.

It is found in the nucleus. In terms of biological role, has a role in transcriptional regulation. Acts in parallel with the Ras/MAPK and the PI3K/PKB pathways in the control of cell identity and cellular growth. Essential for regulation of the cytoskeleton and cell growth but not for cell proliferation or growth rate. Required specifically for the microtubule-based basal transport of lipid droplets. Plays a partially redundant function downstream of Raf in cell fate specification in the developing eye. Pair-rule protein that regulates embryonic cellularization, gastrulation and segmentation. The polypeptide is AF4/FMR2 family member lilli (Drosophila erecta (Fruit fly)).